A 485-amino-acid chain; its full sequence is Aspartyl/glutamyl-tRNA(Asn/Gln) amidotransferase subunit B (485 aa).

It belongs to the GatB/GatE family. GatB subfamily. In terms of assembly, heterotrimer of A, B and C subunits.

The enzyme catalyses L-glutamyl-tRNA(Gln) + L-glutamine + ATP + H2O = L-glutaminyl-tRNA(Gln) + L-glutamate + ADP + phosphate + H(+). It catalyses the reaction L-aspartyl-tRNA(Asn) + L-glutamine + ATP + H2O = L-asparaginyl-tRNA(Asn) + L-glutamate + ADP + phosphate + 2 H(+). Allows the formation of correctly charged Asn-tRNA(Asn) or Gln-tRNA(Gln) through the transamidation of misacylated Asp-tRNA(Asn) or Glu-tRNA(Gln) in organisms which lack either or both of asparaginyl-tRNA or glutaminyl-tRNA synthetases. The reaction takes place in the presence of glutamine and ATP through an activated phospho-Asp-tRNA(Asn) or phospho-Glu-tRNA(Gln). The protein is Aspartyl/glutamyl-tRNA(Asn/Gln) amidotransferase subunit B of Rhodospirillum rubrum (strain ATCC 11170 / ATH 1.1.1 / DSM 467 / LMG 4362 / NCIMB 8255 / S1).